A 218-amino-acid chain; its full sequence is Peptide methionine sulfoxide reductase MsrA (218 aa).

Residue cysteine 57 is part of the active site.

The protein belongs to the MsrA Met sulfoxide reductase family.

It carries out the reaction L-methionyl-[protein] + [thioredoxin]-disulfide + H2O = L-methionyl-(S)-S-oxide-[protein] + [thioredoxin]-dithiol. It catalyses the reaction [thioredoxin]-disulfide + L-methionine + H2O = L-methionine (S)-S-oxide + [thioredoxin]-dithiol. In terms of biological role, has an important function as a repair enzyme for proteins that have been inactivated by oxidation. Catalyzes the reversible oxidation-reduction of methionine sulfoxide in proteins to methionine. This is Peptide methionine sulfoxide reductase MsrA from Brucella melitensis biotype 2 (strain ATCC 23457).